We begin with the raw amino-acid sequence, 638 residues long: ATP-dependent zinc metalloprotease FtsH (638 aa).

Residues 1-4 (MNNQ) lie on the Cytoplasmic side of the membrane. A helical membrane pass occupies residues 5 to 25 (GKNIIVWAVIFVFVILLFNVF). The Periplasmic segment spans residues 26 to 103 (QSDGLLSSKN…VVPPETRMNT (78 aa)). A helical membrane pass occupies residues 104 to 124 (FLSFLISWFPMLLLIGVWVFF). Residues 125 to 638 (MRQMHGGGKA…PIKAKKEDKS (514 aa)) are Cytoplasmic-facing. Residue 195–202 (GPPGTGKT) coordinates ATP. H417 contacts Zn(2+). E418 is a catalytic residue. Zn(2+)-binding residues include H421 and D495. The interval 523–544 (SASEDMYTNRNSSSDRSESTSE) is disordered.

The protein in the central section; belongs to the AAA ATPase family. This sequence in the C-terminal section; belongs to the peptidase M41 family. As to quaternary structure, homohexamer. Zn(2+) serves as cofactor.

The protein resides in the cell inner membrane. Its function is as follows. Acts as a processive, ATP-dependent zinc metallopeptidase for both cytoplasmic and membrane proteins. Plays a role in the quality control of integral membrane proteins. The chain is ATP-dependent zinc metalloprotease FtsH from Rickettsia bellii (strain RML369-C).